The primary structure comprises 406 residues: Cysteine desulfurase (406 aa).

The residue at position 226 (Lys226) is an N6-(pyridoxal phosphate)lysine. Cys364 serves as the catalytic Cysteine persulfide intermediate.

Belongs to the class-V pyridoxal-phosphate-dependent aminotransferase family. Csd subfamily. Homodimer. Interacts with SufE and the SufBCD complex composed of SufB, SufC and SufD. The interaction with SufE is required to mediate the direct transfer of the sulfur atom from the S-sulfanylcysteine. Pyridoxal 5'-phosphate serves as cofactor.

Its subcellular location is the cytoplasm. The enzyme catalyses (sulfur carrier)-H + L-cysteine = (sulfur carrier)-SH + L-alanine. The catalysed reaction is L-selenocysteine + AH2 = hydrogenselenide + L-alanine + A + H(+). The protein operates within cofactor biosynthesis; iron-sulfur cluster biosynthesis. Functionally, cysteine desulfurases mobilize the sulfur from L-cysteine to yield L-alanine, an essential step in sulfur metabolism for biosynthesis of a variety of sulfur-containing biomolecules. Component of the suf operon, which is activated and required under specific conditions such as oxidative stress and iron limitation. Acts as a potent selenocysteine lyase in vitro, that mobilizes selenium from L-selenocysteine. Selenocysteine lyase activity is however unsure in vivo. The polypeptide is Cysteine desulfurase (Enterobacter sp. (strain 638)).